The primary structure comprises 490 residues: Dual specificity protein kinase CLK3 (490 aa).

Positions 1–138 (MHHCKRYRSP…SKRSSRSVED (138 aa)) are disordered. Y7 is modified (phosphotyrosine). Phosphoserine occurs at positions 9, 49, 51, 67, 76, and 78. 2 stretches are compositionally biased toward basic and acidic residues: residues 26-56 (YSRE…DRIP) and 63-76 (EHRD…EERS). Residues 88–116 (RSRHRRRSRERGPYRTRKHAHHCHKRRTR) show a composition bias toward basic residues. The span at 117 to 130 (SCSSASSRSQQSSK) shows a compositional bias: low complexity. S135 bears the Phosphoserine mark. One can recognise a Protein kinase domain in the interval 156–472 (YEIVGNLGEG…LAEALLHPFF (317 aa)). ATP-binding positions include 162 to 170 (LGEGTFGKV) and K186. Catalysis depends on D283, which acts as the Proton acceptor.

The protein belongs to the protein kinase superfamily. CMGC Ser/Thr protein kinase family. Lammer subfamily. Autophosphorylates on all three types of residues.

It is found in the nucleus. The protein resides in the cytoplasm. Its subcellular location is the cytoplasmic vesicle. The protein localises to the secretory vesicle. It localises to the acrosome. It carries out the reaction L-seryl-[protein] + ATP = O-phospho-L-seryl-[protein] + ADP + H(+). The enzyme catalyses L-threonyl-[protein] + ATP = O-phospho-L-threonyl-[protein] + ADP + H(+). The catalysed reaction is L-tyrosyl-[protein] + ATP = O-phospho-L-tyrosyl-[protein] + ADP + H(+). Its activity is regulated as follows. Leucettine L41 inhibits its kinase activity and affects the regulation of alternative splicing mediated by phosphorylation of SR proteins. Functionally, dual specificity kinase acting on both serine/threonine and tyrosine-containing substrates. Phosphorylates serine- and arginine-rich (SR) proteins of the spliceosomal complex. May be a constituent of a network of regulatory mechanisms that enable SR proteins to control RNA splicing and can cause redistribution of SR proteins from speckles to a diffuse nucleoplasmic distribution. Phosphorylates SRSF1 and SRSF3. Regulates the alternative splicing of tissue factor (F3) pre-mRNA in endothelial cells. The protein is Dual specificity protein kinase CLK3 (Clk3) of Rattus norvegicus (Rat).